Consider the following 458-residue polypeptide: ATP synthase subunit beta (458 aa).

148-155 (GGAGVGKT) contributes to the ATP binding site.

The protein belongs to the ATPase alpha/beta chains family. In terms of assembly, F-type ATPases have 2 components, CF(1) - the catalytic core - and CF(0) - the membrane proton channel. CF(1) has five subunits: alpha(3), beta(3), gamma(1), delta(1), epsilon(1). CF(0) has three main subunits: a(1), b(2) and c(9-12). The alpha and beta chains form an alternating ring which encloses part of the gamma chain. CF(1) is attached to CF(0) by a central stalk formed by the gamma and epsilon chains, while a peripheral stalk is formed by the delta and b chains.

It is found in the cell inner membrane. The enzyme catalyses ATP + H2O + 4 H(+)(in) = ADP + phosphate + 5 H(+)(out). In terms of biological role, produces ATP from ADP in the presence of a proton gradient across the membrane. The catalytic sites are hosted primarily by the beta subunits. This is ATP synthase subunit beta from Halorhodospira halophila (strain DSM 244 / SL1) (Ectothiorhodospira halophila (strain DSM 244 / SL1)).